We begin with the raw amino-acid sequence, 386 residues long: tRNA N6-adenosine threonylcarbamoyltransferase (386 aa).

Fe cation is bound by residues histidine 112 and histidine 116. Substrate contacts are provided by residues 134 to 138 (LASGG), aspartate 167, glycine 180, and asparagine 322. Residue aspartate 350 coordinates Fe cation.

The protein belongs to the KAE1 / TsaD family. Requires Fe(2+) as cofactor.

Its subcellular location is the cytoplasm. The enzyme catalyses L-threonylcarbamoyladenylate + adenosine(37) in tRNA = N(6)-L-threonylcarbamoyladenosine(37) in tRNA + AMP + H(+). In terms of biological role, required for the formation of a threonylcarbamoyl group on adenosine at position 37 (t(6)A37) in tRNAs that read codons beginning with adenine. Is involved in the transfer of the threonylcarbamoyl moiety of threonylcarbamoyl-AMP (TC-AMP) to the N6 group of A37, together with TsaE and TsaB. TsaD likely plays a direct catalytic role in this reaction. The protein is tRNA N6-adenosine threonylcarbamoyltransferase of Rickettsia akari (strain Hartford).